The chain runs to 430 residues: Adenylosuccinate synthetase (430 aa).

Residues 12-18 and 40-42 contribute to the GTP site; these read GDEGKGK and GHT. D13 functions as the Proton acceptor in the catalytic mechanism. D13 and G40 together coordinate Mg(2+). IMP contacts are provided by residues 13–16, 38–41, T130, R144, Q224, T239, and R303; these read DEGK and NAGH. The Proton donor role is filled by H41. 299–305 serves as a coordination point for substrate; sequence VVTGRKR. Residues R305, 331 to 333, and 413 to 415 each bind GTP; these read KLD and STS.

The protein belongs to the adenylosuccinate synthetase family. As to quaternary structure, homodimer. Requires Mg(2+) as cofactor.

The protein resides in the cytoplasm. It catalyses the reaction IMP + L-aspartate + GTP = N(6)-(1,2-dicarboxyethyl)-AMP + GDP + phosphate + 2 H(+). Its pathway is purine metabolism; AMP biosynthesis via de novo pathway; AMP from IMP: step 1/2. In terms of biological role, plays an important role in the de novo pathway of purine nucleotide biosynthesis. Catalyzes the first committed step in the biosynthesis of AMP from IMP. The protein is Adenylosuccinate synthetase of Methylobacterium nodulans (strain LMG 21967 / CNCM I-2342 / ORS 2060).